A 711-amino-acid chain; its full sequence is DNA topoisomerase 3 (711 aa).

A Toprim domain is found at 2–135 (KSLILAEKPS…IRRLWISSVT (134 aa)). Positions 8 and 104 each coordinate Mg(2+). A Topo IA-type catalytic domain is found at 152–580 (YNDLYYAALA…EMKDFTKDVV (429 aa)). The interaction with DNA stretch occupies residues 186–191 (SLGRVQ). Tyr305 serves as the catalytic O-(5'-phospho-DNA)-tyrosine intermediate. Residues 691–711 (MNKNEGLDNNPFKDALKNLNL) are disordered.

It belongs to the type IA topoisomerase family. It depends on Mg(2+) as a cofactor.

The catalysed reaction is ATP-independent breakage of single-stranded DNA, followed by passage and rejoining.. Releases the supercoiling and torsional tension of DNA, which is introduced during the DNA replication and transcription, by transiently cleaving and rejoining one strand of the DNA duplex. Introduces a single-strand break via transesterification at a target site in duplex DNA. The scissile phosphodiester is attacked by the catalytic tyrosine of the enzyme, resulting in the formation of a DNA-(5'-phosphotyrosyl)-enzyme intermediate and the expulsion of a 3'-OH DNA strand. The free DNA strand then undergoes passage around the unbroken strand, thus removing DNA supercoils. Finally, in the religation step, the DNA 3'-OH attacks the covalent intermediate to expel the active-site tyrosine and restore the DNA phosphodiester backbone. This chain is DNA topoisomerase 3, found in Staphylococcus aureus (strain Mu50 / ATCC 700699).